The primary structure comprises 65 residues: Toxin Co52 (65 aa).

An LCN-type CS-alpha/beta domain is found at Glu2–Cys65. 4 cysteine pairs are disulfide-bonded: Cys12-Cys65, Cys16-Cys41, Cys25-Cys46, and Cys29-Cys48.

Expressed by the venom gland.

The protein resides in the secreted. In terms of biological role, beta toxins bind voltage-independently at site-4 of sodium channels (Nav) and shift the voltage of activation toward more negative potentials thereby affecting sodium channel activation and promoting spontaneous and repetitive firing. Not toxic to mice, chicks, crickets or woodlice (at 5 ug). The sequence is that of Toxin Co52 from Centruroides ornatus (Scorpion).